The following is a 517-amino-acid chain: GMP synthase [glutamine-hydrolyzing] (517 aa).

Residues 9–199 form the Glutamine amidotransferase type-1 domain; it reads RILILDFGSQ…VLGVCGCERL (191 aa). The Nucleophile role is filled by C86. Active-site residues include H173 and E175. The region spanning 200 to 392 is the GMPS ATP-PPase domain; it reads WTSESIIEDA…LGLPYNMLYR (193 aa). 227–233 is an ATP binding site; the sequence is SGGVDSS.

As to quaternary structure, homodimer.

It carries out the reaction XMP + L-glutamine + ATP + H2O = GMP + L-glutamate + AMP + diphosphate + 2 H(+). Its pathway is purine metabolism; GMP biosynthesis; GMP from XMP (L-Gln route): step 1/1. Functionally, catalyzes the synthesis of GMP from XMP. The chain is GMP synthase [glutamine-hydrolyzing] from Vibrio campbellii (strain ATCC BAA-1116).